A 1242-amino-acid polypeptide reads, in one-letter code: MRSRSNSGVRLDSYARLVQQHTILCHQNPVTGLLPASYDQKDAWVRDNVYSILAVWGLGLAYRKNADRDEDKAKAYELEQSVVKLMRGLLHCMIRQVDKVESFKYSQSTKDSLHAKYNTKTCATVVGDDQWGHLQLDATSVYLLFLAQMTASGLHIIHSLDEVNFIQNLVFYIEAAYKTADFGIWERGDKTNQGISELNACSVGMAKAALEALDELDLFGVKGGPQSVIHVLADEVQHCQSILNTLLPRASTSKEVDASLLSVISFPAFAVEDSKLVEITKQEIITKLQGRYGCCRFLRDGYKTPKEDPNRLYYEPAELKLFENIECEWPLFWTYFILDGIFSGNTEQVQEYREALDAVLIKGKNGVPLLPELYSVPPDRVDEEYQNPHTVDRVPMGKLPHMWGQSLYILGNLMAEGFLAPGEIDPLNRRFSTVPKPDVVVQVSILAETEEIKAILKDKGIDVETIAEVYPIRVQPARILSHIYSSLGCNSRMKLSGRPYRLMGVLGTSKLYDIRKTIYTFTPQFIDQQQFYLALDNQMIVEMLRTDLSYLCSRWRMTGQPTITFPISHTMLDEDGASLNSSILAALRKMQDGYFGGARIQTGKLSEFLTTSCCTHLSFMDPGPEGKLYSEDYDEDYDDELDSGNWMDSYDSTRNARCGDEVARYLDHLLAHTGPHPKLTPTSRKGGLDRFRAAVQTTCDLMSLVAKAKELHIQNVHMYLPTKLFQPSRPSLNLLDSPESPQDSQVPSVRVEVHLPRDQSGEVDFQSLVSQLKETSSLQEQADILYMLYTMKGPDWNTELYEEGGSTVRELLSELYVKVGEIRHWGLIRYISGILRKKVEALDEACTDLLSYQKHLTVGLPPEPREKTISAPLPYEALTKLIDEASEGDMNISTLTQEIMVYLAMYMRTQPGLFAEMFRLRIGLIIQVMATELAHSLRCSAEEATEGLMNLSPSAMRNLLHHILSGKEFGVERSVRPTDSNVSPAISIHEIGAVGATKTERTGIMQLKSEIKQVEFRRLSVSPESQTSGGHPSSIDLMSPTFLSPAACISASSGSFPTVCEPQTSKDSRQGQWQRRRRLDGALNRVPIGFYQKVWKILQKCHGLSVEGFVLPSSSTREMTPGEIKFSVHVESVLNRVPQPEYRQLLVEAILVLTMLADIEIHSIGSIIAVEKIVHIANDLFLQEKKTLGADDIMLAKDPASGICTLLYDSAPSGRFGTMTYLSKAAATYVQEFLPHSLCAVQ.

Phosphoserine is present on residues serine 630, serine 731, serine 737, serine 740, serine 760, serine 813, serine 974, serine 983, and serine 987. The interval 812 to 842 is calmodulin-binding; that stretch reads LSELYVKVGEIRHWGLIRYISGILRKKVEAL. Residue serine 1009 is modified to Phosphoserine; by autocatalysis. Serine 1020 bears the Phosphoserine; by PKA mark. Residues serine 1022 and serine 1025 each carry the phosphoserine modification. The calmodulin-binding stretch occupies residues 1065 to 1105; sequence SKDSRQGQWQRRRRLDGALNRVPIGFYQKVWKILQKCHGLS. At serine 1132 the chain carries Phosphoserine. The S-farnesyl cysteine moiety is linked to residue cysteine 1239.

The protein belongs to the phosphorylase b kinase regulatory chain family. As to quaternary structure, hexadecamer of 4 heterotetramers, each composed of alpha, beta, gamma, and delta subunits. Alpha (PHKA1 or PHKA2) and beta (PHKB) are regulatory subunits, gamma (PHKG1 or PHKG2) is the catalytic subunit, and delta is calmodulin. Although the final Cys may be farnesylated, the terminal tripeptide is probably not removed, and the C-terminus is not methylated.

Its subcellular location is the cell membrane. It participates in glycan biosynthesis; glycogen metabolism. By phosphorylation of various serine residues and by calcium. In terms of biological role, phosphorylase b kinase catalyzes the phosphorylation of serine in certain substrates, including troponin I. The alpha chain may bind calmodulin. The sequence is that of Phosphorylase b kinase regulatory subunit alpha, skeletal muscle isoform (Phka1) from Rattus norvegicus (Rat).